The following is a 415-amino-acid chain: Stimulator of interferon genes protein (415 aa).

Positions 29-163 (HVYHAFISYC…DIIQAISKPE (135 aa)) constitute a TIR domain. E104 is a catalytic residue. R256 lines the 2',3'-cGAMP pocket. Residues 387–415 (KSPSSTNMVKSEPNIYREESGKTKSVERG) form a disordered region. The segment covering 401-415 (IYREESGKTKSVERG) has biased composition (basic and acidic residues).

In the N-terminal section; belongs to the Toll-like receptor family. This sequence in the C-terminal section; belongs to the TMEM173 family. Homodimer.

It catalyses the reaction NAD(+) + H2O = ADP-D-ribose + nicotinamide + H(+). Functionally, sensor of cytosolic DNA from bacteria and viruses that promotes autophagy. Binds c-di-AMP, 2'3'-cGAMP, 3'3'-cGAMP and to a lesser extent c-di-GMP. Nucleotide binding has not been seen to stimulate NAD(+) hydrolase activity. This Magallana gigas (Pacific oyster) protein is Stimulator of interferon genes protein.